A 213-amino-acid chain; its full sequence is High frequency lysogenization protein HflD homolog (213 aa).

The protein belongs to the HflD family.

It localises to the cytoplasm. Its subcellular location is the cell inner membrane. This Alcanivorax borkumensis (strain ATCC 700651 / DSM 11573 / NCIMB 13689 / SK2) protein is High frequency lysogenization protein HflD homolog.